The sequence spans 279 residues: Tryptophan synthase alpha chain (279 aa).

Residues Glu-50 and Asp-61 each act as proton acceptor in the active site.

Belongs to the TrpA family. As to quaternary structure, tetramer of two alpha and two beta chains.

It catalyses the reaction (1S,2R)-1-C-(indol-3-yl)glycerol 3-phosphate + L-serine = D-glyceraldehyde 3-phosphate + L-tryptophan + H2O. Its pathway is amino-acid biosynthesis; L-tryptophan biosynthesis; L-tryptophan from chorismate: step 5/5. Its function is as follows. The alpha subunit is responsible for the aldol cleavage of indoleglycerol phosphate to indole and glyceraldehyde 3-phosphate. The polypeptide is Tryptophan synthase alpha chain (Rhizobium meliloti (strain 1021) (Ensifer meliloti)).